We begin with the raw amino-acid sequence, 435 residues long: GTPase Der (435 aa).

EngA-type G domains follow at residues 4–167 and 175–350; these read PTLA…PSED and IKFS…ENQT. GTP contacts are provided by residues 10–17, 57–61, 119–122, 181–188, 228–232, and 293–296; these read GRPNVGKS, DTGGI, NKVD, DTAGI, and NKWD. Residues 351 to 435 form the KH-like domain; the sequence is RRIQSSVLND…PIHIIARKRK (85 aa).

It belongs to the TRAFAC class TrmE-Era-EngA-EngB-Septin-like GTPase superfamily. EngA (Der) GTPase family. In terms of assembly, associates with the 50S ribosomal subunit.

Its function is as follows. GTPase that plays an essential role in the late steps of ribosome biogenesis. The sequence is that of GTPase Der from Lacticaseibacillus paracasei (strain ATCC 334 / BCRC 17002 / CCUG 31169 / CIP 107868 / KCTC 3260 / NRRL B-441) (Lactobacillus paracasei).